The sequence spans 957 residues: UvrABC system protein A (957 aa).

Residue 33–40 (GLSGSGKS) participates in ATP binding. The C4-type zinc-finger motif lies at 252–279 (CPQCGFSIPELEPRMFSFNSPFGACPTC). ABC transporter domains are found at residues 309 to 587 (WEPI…AKSL) and 607 to 935 (PNGR…KYLR). 639–646 (GVSGSGKS) contributes to the ATP binding site. The segment at 738–764 (CEACRGDGIIKIEMHFLPDVYVPCEVC) adopts a C4-type zinc-finger fold.

This sequence belongs to the ABC transporter superfamily. UvrA family. Forms a heterotetramer with UvrB during the search for lesions.

It localises to the cytoplasm. The UvrABC repair system catalyzes the recognition and processing of DNA lesions. UvrA is an ATPase and a DNA-binding protein. A damage recognition complex composed of 2 UvrA and 2 UvrB subunits scans DNA for abnormalities. When the presence of a lesion has been verified by UvrB, the UvrA molecules dissociate. This chain is UvrABC system protein A, found in Halalkalibacterium halodurans (strain ATCC BAA-125 / DSM 18197 / FERM 7344 / JCM 9153 / C-125) (Bacillus halodurans).